The following is a 222-amino-acid chain: Leucyl/phenylalanyl-tRNA--protein transferase (222 aa).

It belongs to the L/F-transferase family.

It localises to the cytoplasm. It catalyses the reaction N-terminal L-lysyl-[protein] + L-leucyl-tRNA(Leu) = N-terminal L-leucyl-L-lysyl-[protein] + tRNA(Leu) + H(+). It carries out the reaction N-terminal L-arginyl-[protein] + L-leucyl-tRNA(Leu) = N-terminal L-leucyl-L-arginyl-[protein] + tRNA(Leu) + H(+). The catalysed reaction is L-phenylalanyl-tRNA(Phe) + an N-terminal L-alpha-aminoacyl-[protein] = an N-terminal L-phenylalanyl-L-alpha-aminoacyl-[protein] + tRNA(Phe). Functionally, functions in the N-end rule pathway of protein degradation where it conjugates Leu, Phe and, less efficiently, Met from aminoacyl-tRNAs to the N-termini of proteins containing an N-terminal arginine or lysine. This chain is Leucyl/phenylalanyl-tRNA--protein transferase, found in Legionella pneumophila (strain Paris).